Consider the following 379-residue polypeptide: Cell cycle checkpoint control protein RAD9A (379 aa).

Phosphotyrosine is present on Y17. The segment at 40 to 80 (FLFAPLFFQQYQAATPGQDLLRCKILMKSFLSVFRSLAMLE) is possesses 3'-5' exonuclease activity. The interval 255–379 (SDTDSHSQDL…VLAEDSEGEG (125 aa)) is sufficient for interaction with ABL1. Positions 257–271 (TDSHSQDLGSPERHQ) are enriched in basic and acidic residues. 2 disordered regions span residues 257–289 (TDSH…DFAN) and 308–379 (SRVL…EGEG). A phosphoserine mark is found at S261, S266, S317, S330, S363, S368, and S375.

It belongs to the rad9 family. As to quaternary structure, component of the toroidal 9-1-1 (RAD9-RAD1-HUS1) complex, composed of RAD9A, RAD1 and HUS1. The 9-1-1 complex associates with LIG1, POLB, FEN1, RAD17, HDAC1, RPA1 and RPA2. The 9-1-1 complex associates with the RAD17-RFC complex. RAD9A interacts with BCL2L1, FEN1, RAD9B, ABL1, RPA1, ATAD5 and RPA2. Interacts with DNAJC7. Interacts (when phosphorylated) with TOPBP1. Post-translationally, constitutively phosphorylated on serine and threonine amino acids in absence of DNA damage. Hyperphosphorylated by PRKCD and ABL1 upon DNA damage. Its phosphorylation by PRKCD may be required for the formation of the 9-1-1 complex. Phosphorylated at Ser-330 and Ser-375 by CK2, promoting interaction with TOPBP1.

The protein localises to the nucleus. The catalysed reaction is Exonucleolytic cleavage in the 3'- to 5'-direction to yield nucleoside 5'-phosphates.. In terms of biological role, component of the 9-1-1 cell-cycle checkpoint response complex that plays a major role in DNA repair. The 9-1-1 complex is recruited to DNA lesion upon damage by the RAD17-replication factor C (RFC) clamp loader complex. Acts then as a sliding clamp platform on DNA for several proteins involved in long-patch base excision repair (LP-BER). The 9-1-1 complex stimulates DNA polymerase beta (POLB) activity by increasing its affinity for the 3'-OH end of the primer-template and stabilizes POLB to those sites where LP-BER proceeds; endonuclease FEN1 cleavage activity on substrates with double, nick, or gap flaps of distinct sequences and lengths; and DNA ligase I (LIG1) on long-patch base excision repair substrates. The 9-1-1 complex is necessary for the recruitment of RHNO1 to sites of double-stranded breaks (DSB) occurring during the S phase. RAD9A possesses 3'-&gt;5' double stranded DNA exonuclease activity. This chain is Cell cycle checkpoint control protein RAD9A (RAD9A), found in Macaca fascicularis (Crab-eating macaque).